The following is a 315-amino-acid chain: S-methyl-5'-thioadenosine phosphorylase (315 aa).

Residues Ser22, Arg65–His66, and Ser98–Ala99 contribute to the phosphate site. Residue Met205 participates in substrate binding. Ser206 is a phosphate binding site. Position 229–231 (Asp229–Asp231) interacts with substrate.

The protein belongs to the PNP/MTAP phosphorylase family. MTAP subfamily. In terms of assembly, homotrimer.

The protein localises to the cytoplasm. Its subcellular location is the nucleus. It catalyses the reaction S-methyl-5'-thioadenosine + phosphate = 5-(methylsulfanyl)-alpha-D-ribose 1-phosphate + adenine. It participates in amino-acid biosynthesis; L-methionine biosynthesis via salvage pathway; S-methyl-5-thio-alpha-D-ribose 1-phosphate from S-methyl-5'-thioadenosine (phosphorylase route): step 1/1. Catalyzes the reversible phosphorylation of S-methyl-5'-thioadenosine (MTA) to adenine and 5-methylthioribose-1-phosphate. Involved in the breakdown of MTA, a major by-product of polyamine biosynthesis. Responsible for the first step in the methionine salvage pathway after MTA has been generated from S-adenosylmethionine. Has broad substrate specificity with 6-aminopurine nucleosides as preferred substrates. The protein is S-methyl-5'-thioadenosine phosphorylase of Mycosarcoma maydis (Corn smut fungus).